Here is a 397-residue protein sequence, read N- to C-terminus: P2X purinoceptor 3 (397 aa).

Residues 1 to 20 (MNCISDFFTYETTKSVVVKS) lie on the Cytoplasmic side of the membrane. The chain crosses the membrane as a helical span at residues 21-43 (WTIGIINRAVQLLIISYFVGWVF). Residues 44–322 (LHEKAYQVRD…AGKFNIIPTI (279 aa)) are Extracellular-facing. K63 and K65 together coordinate ATP. 3 disulfide bridges follow: C107/C153, C116/C137, and C122/C147. E111 contributes to the Mg(2+) binding site. N139 carries N-linked (GlcNAc...) asparagine glycosylation. Residue D158 coordinates Mg(2+). Residue D158 coordinates Ca(2+). A glycan (N-linked (GlcNAc...) asparagine) is linked at N170. ATP is bound at residue T172. The N-linked (GlcNAc...) asparagine glycan is linked to N194. Disulfide bonds link C203-C213 and C247-C256. Residues S275, N279, and R281 each contribute to the ATP site. N290 carries an N-linked (GlcNAc...) asparagine glycan. K299 contacts ATP. A helical transmembrane segment spans residues 323 to 341 (ISSVAAFTSVGVGTVLCDI). The Cytoplasmic portion of the chain corresponds to 342-397 (ILLNFLKGADHYKARKFEEVTETTLKGTASTNPVFASDQATVEKQSTDSGAYSIGH).

This sequence belongs to the P2X receptor family. As to quaternary structure, homotrimer. Forms heterotrimer with P2RX2. Heterotrimeric P2RX2/3 has a ligand dose-response profile that is distinct from either homotrimeric P2RX2 or P2RX3. In terms of tissue distribution, selectively expressed in sensory ganglia.

It localises to the cell membrane. It catalyses the reaction Ca(2+)(in) = Ca(2+)(out). It carries out the reaction Na(+)(in) = Na(+)(out). With respect to regulation, has high sensitivity to ATP. Fast activation by external ATP. Exhibits rapid desensitization. Sensitives to the ATP agonist:alpha/beta-methylene-ATP. Subject to allosteric inhibition by AF-219. Mg(2+) and Ca(2+) slow deactivation of P2RX3. In terms of biological role, extracellular ATP-activated non-selective cation channel. Plays particularly important role in sensory neurons where its activation is critical for gustatory, nociceptive responses, visceral reflexes and sensory hypersensitization. The protein is P2X purinoceptor 3 (P2rx3) of Rattus norvegicus (Rat).